The chain runs to 485 residues: NADH-quinone oxidoreductase subunit N (485 aa).

14 consecutive transmembrane segments (helical) span residues 8 to 28 (LIAL…MLSI), 35 to 55 (FINT…LYFV), 75 to 95 (LYIG…YSWL), 104 to 124 (EFYL…CANH), 125 to 145 (LASL…LIGY), 159 to 179 (YMLL…LLYA), 203 to 223 (ILSG…LVPF), 235 to 255 (PAPV…AVVI), 271 to 291 (TVLT…ALTQ), 297 to 317 (LLGY…VAVQ), 326 to 346 (VGIY…VVSL), 383 to 403 (LAGI…VLGV), 406 to 426 (ELWW…YYYL), and 455 to 475 (MVVL…QPLI).

Belongs to the complex I subunit 2 family. As to quaternary structure, NDH-1 is composed of 13 different subunits. Subunits NuoA, H, J, K, L, M, N constitute the membrane sector of the complex.

It localises to the cell inner membrane. The catalysed reaction is a quinone + NADH + 5 H(+)(in) = a quinol + NAD(+) + 4 H(+)(out). Functionally, NDH-1 shuttles electrons from NADH, via FMN and iron-sulfur (Fe-S) centers, to quinones in the respiratory chain. The immediate electron acceptor for the enzyme in this species is believed to be ubiquinone. Couples the redox reaction to proton translocation (for every two electrons transferred, four hydrogen ions are translocated across the cytoplasmic membrane), and thus conserves the redox energy in a proton gradient. This is NADH-quinone oxidoreductase subunit N from Photorhabdus laumondii subsp. laumondii (strain DSM 15139 / CIP 105565 / TT01) (Photorhabdus luminescens subsp. laumondii).